Consider the following 416-residue polypeptide: MKIYLVGGAVRDSLLNLPIKDKDFMVVGATPEQMQQLGYRQVGKDFPVFLHPKTQQEYALARTERKVGLGYGGFSCYASPDVTLEQDLLRRDLTINAIAQDEAGNLHDPFHGIADIEARQLRHVSAAFSEDPLRVLRVARFAARFHGLGFEIAPETMALMQHMSQTEELTALTPERVWQEVDKSLGGPHPEVFFEVLRQCGALKVLFPEIDALFGVPQPEKWHPEIDTGLHTMMVLAQSSSMTEEKAVRFAALVHDLGKALSPKEHWPKHHGHGQKGLPVIKSLCERLRVPNEYRDLALLVSDQHQNVHQAFELRSETIIKLFDKADFWRKPERLKQLLLACIADMRGRTGFEHQPYPQSDYLNACFLAANNVDVKAIIAAGFQGAQIKQALNSKRIEVVEQVKLNWQQSQAKQTP.

2 residues coordinate ATP: Gly-8 and Arg-11. Positions 8 and 11 each coordinate CTP. Residues Asp-21 and Asp-23 each coordinate Mg(2+). The ATP site is built by Arg-91, Arg-137, and Arg-140. 3 residues coordinate CTP: Arg-91, Arg-137, and Arg-140. The region spanning 228–329 is the HD domain; it reads TGLHTMMVLA…IKLFDKADFW (102 aa).

This sequence belongs to the tRNA nucleotidyltransferase/poly(A) polymerase family. Bacterial CCA-adding enzyme type 1 subfamily. In terms of assembly, monomer. Can also form homodimers and oligomers. Mg(2+) is required as a cofactor. It depends on Ni(2+) as a cofactor.

It catalyses the reaction a tRNA precursor + 2 CTP + ATP = a tRNA with a 3' CCA end + 3 diphosphate. The enzyme catalyses a tRNA with a 3' CCA end + 2 CTP + ATP = a tRNA with a 3' CCACCA end + 3 diphosphate. Functionally, catalyzes the addition and repair of the essential 3'-terminal CCA sequence in tRNAs without using a nucleic acid template. Adds these three nucleotides in the order of C, C, and A to the tRNA nucleotide-73, using CTP and ATP as substrates and producing inorganic pyrophosphate. tRNA 3'-terminal CCA addition is required both for tRNA processing and repair. Also involved in tRNA surveillance by mediating tandem CCA addition to generate a CCACCA at the 3' terminus of unstable tRNAs. While stable tRNAs receive only 3'-terminal CCA, unstable tRNAs are marked with CCACCA and rapidly degraded. The sequence is that of Multifunctional CCA protein from Shewanella sp. (strain MR-7).